A 148-amino-acid chain; its full sequence is Large ribosomal subunit protein bL19 (148 aa).

This sequence belongs to the bacterial ribosomal protein bL19 family.

Functionally, this protein is located at the 30S-50S ribosomal subunit interface and may play a role in the structure and function of the aminoacyl-tRNA binding site. This is Large ribosomal subunit protein bL19 from Beijerinckia indica subsp. indica (strain ATCC 9039 / DSM 1715 / NCIMB 8712).